The following is a 553-amino-acid chain: uncharacterized protein (553 aa).

A signal peptide spans 1 to 28 (MRYARHASRYSLFTLAVSAALLPGAGWA).

This is an uncharacterized protein from Pseudomonas aeruginosa (strain ATCC 15692 / DSM 22644 / CIP 104116 / JCM 14847 / LMG 12228 / 1C / PRS 101 / PAO1).